The sequence spans 292 residues: Small ribosomal subunit protein uS9m (292 aa).

Residues 273 to 292 (VERKKPGKRKARKMPTWVKR) are disordered.

Belongs to the universal ribosomal protein uS9 family.

It is found in the mitochondrion. The polypeptide is Small ribosomal subunit protein uS9m (MRPS9) (Kluyveromyces marxianus (Yeast)).